We begin with the raw amino-acid sequence, 1201 residues long: Period circadian protein homolog 3 (1201 aa).

Residues 1–50 (MPRGEAPGPGRRGAKDEALGEESGERWSPEFHLQRKLADSSHSEQQDRNR) are disordered. A compositionally biased stretch (basic and acidic residues) spans 13–50 (GAKDEALGEESGERWSPEFHLQRKLADSSHSEQQDRNR). The short motif at 55–64 (LIMVVQEMKK) is the Nuclear export signal 1 element. 2 PAS domains span residues 121–188 (IASE…RAQL) and 262–328 (YEAP…KVLK). In terms of domain architecture, PAC spans 337-380 (HSPIRFCTQNGDYIILDSSWSSFVNPWSRKISFIIGRHKVRTSP). A Nuclear export signal 3 motif is present at residues 403 to 412 (LQEQIYKLLL). The tract at residues 555 to 760 (LKRKCISCTN…SSSNTGSGPR (206 aa)) is CSNK1E binding domain. 2 disordered regions span residues 717-788 (YSYF…FPPA) and 881-923 (PSMS…RSSS). A compositionally biased stretch (polar residues) spans 721–731 (QGDSTSKQTRS). The Nuclear localization signal motif lies at 729-745 (TRSAGCRKGKHKRKKLP). Over residues 733–743 (GCRKGKHKRKK) the composition is skewed to basic residues. Low complexity-rich tracts occupy residues 767 to 783 (AQPC…TSSP) and 881 to 890 (PSMSSAMSPT). Residues 900–911 (QRREEEKWEAQS) are compositionally biased toward basic and acidic residues. Ser919 is subject to Phosphoserine. The Nuclear export signal 2 signature appears at 925-932 (LQLNLLQE). A disordered region spans residues 952-1067 (TEYCVTGNNG…GSAASGSSDS (116 aa)). Composition is skewed to polar residues over residues 957-976 (TGNN…STGS), 983-994 (SHPTASALSTGS), 1001-1012 (SHPTASALSTGS), and 1035-1050 (TPSH…GSPP). 5 tandem repeats follow at residues 965 to 982 (SPAT…RENP), 983 to 1000 (SHPT…MKNP), 1001 to 1018 (SHPT…MKNP), 1019 to 1036 (SHPT…SRTP), and 1037 to 1054 (SHPT…SESP). Positions 965–1054 (SPATTGALST…STGSPPSESP (90 aa)) are 5 X 18 AA tandem repeats of S-[HP]-[AP]-T-[AT]-[GST]-[ATV]-L-S-[MT]-G-[LS]-P-P-[MRS]-[EKR]-[NST]-P. Residue Ser994 is modified to Phosphoserine. Residue Ser1053 is modified to Phosphoserine. Positions 1053 to 1067 (SPSRTGSAASGSSDS) are enriched in low complexity. The tract at residues 1123–1201 (ERVKEVVLKE…CGQVLVEDSC (79 aa)) is CRY binding domain.

As to quaternary structure, homodimer. Component of the circadian core oscillator, which includes the CRY proteins, CLOCK or NPAS2, BMAL1 or BMAL2, CSNK1D and/or CSNK1E, TIMELESS and the PER proteins. Interacts directly with PER1, PER2, CRY1, CRY2, and TIMELESS; interaction with CRY1 and CRY2 is weak and not rhythmic. Interacts with FBXW11 and BTRC. In terms of processing, phosphorylation by CSNK1E is weak and appears to require association with PER1 and translocation to the nucleus. Post-translationally, ubiquitinated.

The protein localises to the cytoplasm. The protein resides in the nucleus. Originally described as a core component of the circadian clock. The circadian clock, an internal time-keeping system, regulates various physiological processes through the generation of approximately 24 hour circadian rhythms in gene expression, which are translated into rhythms in metabolism and behavior. It is derived from the Latin roots 'circa' (about) and 'diem' (day) and acts as an important regulator of a wide array of physiological functions including metabolism, sleep, body temperature, blood pressure, endocrine, immune, cardiovascular, and renal function. Consists of two major components: the central clock, residing in the suprachiasmatic nucleus (SCN) of the brain, and the peripheral clocks that are present in nearly every tissue and organ system. Both the central and peripheral clocks can be reset by environmental cues, also known as Zeitgebers (German for 'timegivers'). The predominant Zeitgeber for the central clock is light, which is sensed by retina and signals directly to the SCN. The central clock entrains the peripheral clocks through neuronal and hormonal signals, body temperature and feeding-related cues, aligning all clocks with the external light/dark cycle. Circadian rhythms allow an organism to achieve temporal homeostasis with its environment at the molecular level by regulating gene expression to create a peak of protein expression once every 24 hours to control when a particular physiological process is most active with respect to the solar day. Transcription and translation of core clock components (CLOCK, NPAS2, BMAL1, BMAL2, PER1, PER2, PER3, CRY1 and CRY2) plays a critical role in rhythm generation, whereas delays imposed by post-translational modifications (PTMs) are important for determining the period (tau) of the rhythms (tau refers to the period of a rhythm and is the length, in time, of one complete cycle). A diurnal rhythm is synchronized with the day/night cycle, while the ultradian and infradian rhythms have a period shorter and longer than 24 hours, respectively. Disruptions in the circadian rhythms contribute to the pathology of cardiovascular diseases, cancer, metabolic syndromes and aging. A transcription/translation feedback loop (TTFL) forms the core of the molecular circadian clock mechanism. Transcription factors, CLOCK or NPAS2 and BMAL1 or BMAL2, form the positive limb of the feedback loop, act in the form of a heterodimer and activate the transcription of core clock genes and clock-controlled genes (involved in key metabolic processes), harboring E-box elements (5'-CACGTG-3') within their promoters. The core clock genes: PER1/2/3 and CRY1/2 which are transcriptional repressors form the negative limb of the feedback loop and interact with the CLOCK|NPAS2-BMAL1|BMAL2 heterodimer inhibiting its activity and thereby negatively regulating their own expression. This heterodimer also activates nuclear receptors NR1D1, NR1D2, RORA, RORB and RORG, which form a second feedback loop and which activate and repress BMAL1 transcription, respectively. Has a redundant role with the other PER proteins PER1 and PER2 and is not essential for the circadian rhythms maintenance. In contrast, plays an important role in sleep-wake timing and sleep homeostasis probably through the transcriptional regulation of sleep homeostasis-related genes, without influencing circadian parameters. Can bind heme. The polypeptide is Period circadian protein homolog 3 (PER3) (Homo sapiens (Human)).